The following is a 212-amino-acid chain: Thymidylate kinase (212 aa).

10–17 (GPDGAGKS) serves as a coordination point for ATP.

Belongs to the thymidylate kinase family.

It carries out the reaction dTMP + ATP = dTDP + ADP. In terms of biological role, phosphorylation of dTMP to form dTDP in both de novo and salvage pathways of dTTP synthesis. The sequence is that of Thymidylate kinase from Lactobacillus helveticus (strain DPC 4571).